Consider the following 218-residue polypeptide: Phosphoglycolate phosphatase (218 aa).

Catalysis depends on D7, which acts as the Nucleophile. Positions 7, 9, and 167 each coordinate Mg(2+).

The protein belongs to the HAD-like hydrolase superfamily. CbbY/CbbZ/Gph/YieH family. Mg(2+) is required as a cofactor.

It catalyses the reaction 2-phosphoglycolate + H2O = glycolate + phosphate. The protein operates within organic acid metabolism; glycolate biosynthesis; glycolate from 2-phosphoglycolate: step 1/1. In terms of biological role, specifically catalyzes the dephosphorylation of 2-phosphoglycolate. Is involved in the dissimilation of the intracellular 2-phosphoglycolate formed during the DNA repair of 3'-phosphoglycolate ends, a major class of DNA lesions induced by oxidative stress. The sequence is that of Phosphoglycolate phosphatase from Cereibacter sphaeroides (strain ATCC 17029 / ATH 2.4.9) (Rhodobacter sphaeroides).